The chain runs to 326 residues: Acetyl-coenzyme A carboxylase carboxyl transferase subunit alpha (326 aa).

Residues 46–300 (EIEARAAELR…KEALLRHLDE (255 aa)) form the CoA carboxyltransferase C-terminal domain.

This sequence belongs to the AccA family. As to quaternary structure, acetyl-CoA carboxylase is a heterohexamer composed of biotin carboxyl carrier protein (AccB), biotin carboxylase (AccC) and two subunits each of ACCase subunit alpha (AccA) and ACCase subunit beta (AccD).

Its subcellular location is the cytoplasm. The enzyme catalyses N(6)-carboxybiotinyl-L-lysyl-[protein] + acetyl-CoA = N(6)-biotinyl-L-lysyl-[protein] + malonyl-CoA. It participates in lipid metabolism; malonyl-CoA biosynthesis; malonyl-CoA from acetyl-CoA: step 1/1. Its function is as follows. Component of the acetyl coenzyme A carboxylase (ACC) complex. First, biotin carboxylase catalyzes the carboxylation of biotin on its carrier protein (BCCP) and then the CO(2) group is transferred by the carboxyltransferase to acetyl-CoA to form malonyl-CoA. In Gloeobacter violaceus (strain ATCC 29082 / PCC 7421), this protein is Acetyl-coenzyme A carboxylase carboxyl transferase subunit alpha.